The sequence spans 184 residues: Large ribosomal subunit protein uL6 (184 aa).

The protein belongs to the universal ribosomal protein uL6 family. In terms of assembly, part of the 50S ribosomal subunit.

This protein binds to the 23S rRNA, and is important in its secondary structure. It is located near the subunit interface in the base of the L7/L12 stalk, and near the tRNA binding site of the peptidyltransferase center. The sequence is that of Large ribosomal subunit protein uL6 from Mycoplasma genitalium (strain ATCC 33530 / DSM 19775 / NCTC 10195 / G37) (Mycoplasmoides genitalium).